A 235-amino-acid chain; its full sequence is Enolase-phosphatase E1 (235 aa).

Belongs to the HAD-like hydrolase superfamily. MasA/MtnC family. Monomer. Mg(2+) serves as cofactor.

It carries out the reaction 5-methylsulfanyl-2,3-dioxopentyl phosphate + H2O = 1,2-dihydroxy-5-(methylsulfanyl)pent-1-en-3-one + phosphate. It functions in the pathway amino-acid biosynthesis; L-methionine biosynthesis via salvage pathway; L-methionine from S-methyl-5-thio-alpha-D-ribose 1-phosphate: step 3/6. It participates in amino-acid biosynthesis; L-methionine biosynthesis via salvage pathway; L-methionine from S-methyl-5-thio-alpha-D-ribose 1-phosphate: step 4/6. Its function is as follows. Bifunctional enzyme that catalyzes the enolization of 2,3-diketo-5-methylthiopentyl-1-phosphate (DK-MTP-1-P) into the intermediate 2-hydroxy-3-keto-5-methylthiopentenyl-1-phosphate (HK-MTPenyl-1-P), which is then dephosphorylated to form the acireductone 1,2-dihydroxy-3-keto-5-methylthiopentene (DHK-MTPene). This Gluconacetobacter diazotrophicus (strain ATCC 49037 / DSM 5601 / CCUG 37298 / CIP 103539 / LMG 7603 / PAl5) protein is Enolase-phosphatase E1.